Reading from the N-terminus, the 344-residue chain is Glutamine synthetase (344 aa).

Positions 4–86 constitute a GS beta-grasp domain; it reads YKLEYIWLDG…VMCEVMMPDG (83 aa). The 256-residue stretch at 89 to 344 folds into the GS catalytic domain; it reads PHASNKRATI…SVPTEKKAVA (256 aa). Residues glutamate 109 and glutamate 111 each coordinate Mg(2+). An ATP-binding site is contributed by glutamate 167. Glutamate 172 and glutamate 179 together coordinate Mg(2+). L-glutamate is bound at residue glutamate 278.

Belongs to the glutamine synthetase family. Homooctamer and homotetramer. It depends on Mg(2+) as a cofactor.

It localises to the cytoplasm. It carries out the reaction L-glutamate + NH4(+) + ATP = L-glutamine + ADP + phosphate + H(+). Its function is as follows. Catalyzes the ATP-dependent biosynthesis of glutamine from glutamate and ammonia. In Bradyrhizobium diazoefficiens (strain JCM 10833 / BCRC 13528 / IAM 13628 / NBRC 14792 / USDA 110), this protein is Glutamine synthetase.